Reading from the N-terminus, the 244-residue chain is uncharacterized protein (244 aa).

The GP-PDE domain maps to 5-244; that stretch reads QLLLAHRGYS…ANKKFEIKIN (240 aa).

It to glycerophosphoryl diester phosphodiesterases (EC 3.1.4.46). To M.genitalium MG385.

This is an uncharacterized protein from Mycoplasma genitalium (strain ATCC 33530 / DSM 19775 / NCTC 10195 / G37) (Mycoplasmoides genitalium).